The chain runs to 88 residues: Small ribosomal subunit protein uS15 (88 aa).

The protein belongs to the universal ribosomal protein uS15 family. In terms of assembly, part of the 30S ribosomal subunit. Forms a bridge to the 50S subunit in the 70S ribosome, contacting the 23S rRNA.

Its function is as follows. One of the primary rRNA binding proteins, it binds directly to 16S rRNA where it helps nucleate assembly of the platform of the 30S subunit by binding and bridging several RNA helices of the 16S rRNA. Functionally, forms an intersubunit bridge (bridge B4) with the 23S rRNA of the 50S subunit in the ribosome. This is Small ribosomal subunit protein uS15 from Leptospira biflexa serovar Patoc (strain Patoc 1 / Ames).